Reading from the N-terminus, the 444-residue chain is Argininosuccinate synthase (444 aa).

ATP-binding positions include 18–26 (AFSGGLDTS) and Ala-44. Residue Tyr-100 coordinates L-citrulline. ATP is bound by residues Gly-130 and Thr-132. Residues Thr-132, Asn-136, and Asp-137 each coordinate L-aspartate. Asn-136 contributes to the L-citrulline binding site. Asp-137 serves as a coordination point for ATP. L-citrulline-binding residues include Arg-140 and Ser-193. Asp-195 is a binding site for ATP. Positions 202, 204, and 281 each coordinate L-citrulline.

It belongs to the argininosuccinate synthase family. Type 2 subfamily. In terms of assembly, homotetramer.

The protein resides in the cytoplasm. The enzyme catalyses L-citrulline + L-aspartate + ATP = 2-(N(omega)-L-arginino)succinate + AMP + diphosphate + H(+). Its pathway is amino-acid biosynthesis; L-arginine biosynthesis; L-arginine from L-ornithine and carbamoyl phosphate: step 2/3. This chain is Argininosuccinate synthase, found in Histophilus somni (strain 2336) (Haemophilus somnus).